We begin with the raw amino-acid sequence, 78 residues long: DNA-directed RNA polymerase subunit omega (78 aa).

The protein belongs to the RNA polymerase subunit omega family. In cyanobacteria the RNAP catalytic core is composed of 2 alpha, 1 beta, 1 beta', 1 gamma and 1 omega subunit. When a sigma factor is associated with the core the holoenzyme is formed, which can initiate transcription.

The enzyme catalyses RNA(n) + a ribonucleoside 5'-triphosphate = RNA(n+1) + diphosphate. Functionally, promotes RNA polymerase assembly. Latches the N- and C-terminal regions of the beta' subunit thereby facilitating its interaction with the beta and alpha subunits. The sequence is that of DNA-directed RNA polymerase subunit omega from Prochlorococcus marinus (strain AS9601).